We begin with the raw amino-acid sequence, 360 residues long: Cinnamyl alcohol dehydrogenase 2 (360 aa).

Residues 23–351 (GVLSPFNFSR…KADVKYRFVI (329 aa)) enclose the Enoyl reductase (ER) domain. Zn(2+) is bound at residue C50. S52 lines the an alcohol pocket. S52 contributes to the NADP(+) binding site. D53, H72, E73, C103, C106, C109, C117, and C166 together coordinate Zn(2+). H72 contacts an alcohol. NADP(+)-binding residues include L192, G194, L195, S214, T215, S216, K219, K220, V277, A279, S301, and R348.

It belongs to the zinc-containing alcohol dehydrogenase family. Class-P subfamily. Homodimer. Zn(2+) serves as cofactor. Mainly expressed in young roots and, to a lower extent, in stems and leaves.

Its subcellular location is the cytoplasm. It carries out the reaction (E)-cinnamyl alcohol + NADP(+) = (E)-cinnamaldehyde + NADPH + H(+). In terms of biological role, alcohol dehydrogenase that catalyzes the conversion of (E)-cinnamyl alcohol to (E)-cinnamaldehyde. The chain is Cinnamyl alcohol dehydrogenase 2 from Rauvolfia serpentina (Serpentine wood).